The sequence spans 1054 residues: Translation initiation factor IF-2 (1054 aa).

Disordered regions lie at residues 57–213 (DKRK…AASC), 225–248 (DPLA…NPGD), 287–315 (SGRP…HGLQ), and 401–436 (DHAG…KQEL). Over residues 92-104 (QEPSQAASDVSSP) the composition is skewed to polar residues. A compositionally biased stretch (low complexity) spans 111–213 (EASGAEAAAS…VTSGRRAASC (103 aa)). Basic and acidic residues predominate over residues 401–418 (DHAGRGRELVDVSKNKDK). Residues 552 to 721 (TRPPVVTVMG…VLQAEVLELT (170 aa)) form the tr-type G domain. The tract at residues 561–568 (GHVDHGKT) is G1. Position 561-568 (561-568 (GHVDHGKT)) interacts with GTP. The interval 586–590 (GITQH) is G2. The segment at 607-610 (DTPG) is G3. GTP contacts are provided by residues 607-611 (DTPGH) and 661-664 (NKMD). Positions 661–664 (NKMD) are G4. The G5 stretch occupies residues 697 to 699 (SAK).

This sequence belongs to the TRAFAC class translation factor GTPase superfamily. Classic translation factor GTPase family. IF-2 subfamily.

It localises to the cytoplasm. One of the essential components for the initiation of protein synthesis. Protects formylmethionyl-tRNA from spontaneous hydrolysis and promotes its binding to the 30S ribosomal subunits. Also involved in the hydrolysis of GTP during the formation of the 70S ribosomal complex. This chain is Translation initiation factor IF-2 (infB), found in Stigmatella aurantiaca.